A 127-amino-acid chain; its full sequence is Holo-[acyl-carrier-protein] synthase (127 aa).

Aspartate 7 and glutamate 56 together coordinate Mg(2+).

The protein belongs to the P-Pant transferase superfamily. AcpS family. Requires Mg(2+) as cofactor.

Its subcellular location is the cytoplasm. The catalysed reaction is apo-[ACP] + CoA = holo-[ACP] + adenosine 3',5'-bisphosphate + H(+). In terms of biological role, transfers the 4'-phosphopantetheine moiety from coenzyme A to a Ser of acyl-carrier-protein. The sequence is that of Holo-[acyl-carrier-protein] synthase from Onion yellows phytoplasma (strain OY-M).